Consider the following 347-residue polypeptide: MSENSIRLTQYSHGAGCGCKISPKVLETILHSEQAKFVDPNLLVGNETRDDAAVYDLGNGTSVISTTDFFMPIVDNPFDFGRIAATNAISDIFAMGGKPIMAIAILGWPINKLSPEIAREVTEGGRYACRQAGIALAGGHSIDAPEPIFGLAVTGIVPTERVKKNSTAQAGCKLFLTKPLGIGVLTTAEKKSLLKPEHQGLATEVMCRMNIAGASFANIEGVKAMTDVTGFGLLGHLSEMCQGAGVQARVDYEAIPKLPGVEEYIKLGAVPGGTERNFASYGHLMGEMPREVRDLLCDPQTSGGLLLAVMPEAENEVKATAAEFGIELTAIGELVPARGGRAMVEIR.

Cys-17 is a catalytic residue. Residues Lys-20 and Thr-48 to Asp-50 contribute to the ATP site. Asp-51 is a Mg(2+) binding site. ATP contacts are provided by residues Asp-68, Asp-91, and Gly-139 to Ser-141. Mg(2+) is bound at residue Asp-91. A Mg(2+)-binding site is contributed by Asp-227.

It belongs to the selenophosphate synthase 1 family. Class I subfamily. Homodimer. It depends on Mg(2+) as a cofactor.

It catalyses the reaction hydrogenselenide + ATP + H2O = selenophosphate + AMP + phosphate + 2 H(+). In terms of biological role, synthesizes selenophosphate from selenide and ATP. This Escherichia coli O9:H4 (strain HS) protein is Selenide, water dikinase.